The primary structure comprises 231 residues: NADH-ubiquinone oxidoreductase chain 4 (231 aa).

Transmembrane regions (helical) follow at residues P1 to I21, M34 to L54, I63 to G85, G89 to Y111, I118 to L138, and L156 to S176.

This sequence belongs to the complex I subunit 4 family.

It is found in the mitochondrion membrane. The enzyme catalyses a ubiquinone + NADH + 5 H(+)(in) = a ubiquinol + NAD(+) + 4 H(+)(out). Core subunit of the mitochondrial membrane respiratory chain NADH dehydrogenase (Complex I) that is believed to belong to the minimal assembly required for catalysis. Complex I functions in the transfer of electrons from NADH to the respiratory chain. The immediate electron acceptor for the enzyme is believed to be ubiquinone. The polypeptide is NADH-ubiquinone oxidoreductase chain 4 (MT-ND4) (Calloselasma rhodostoma (Malayan pit viper)).